The following is a 617-amino-acid chain: Dihydroxy-acid dehydratase (617 aa).

D81 serves as a coordination point for Mg(2+). C122 is a [2Fe-2S] cluster binding site. Residues D123 and K124 each coordinate Mg(2+). K124 carries the N6-carboxylysine modification. Residue C195 coordinates [2Fe-2S] cluster. E491 is a binding site for Mg(2+). The active-site Proton acceptor is S517.

This sequence belongs to the IlvD/Edd family. In terms of assembly, homodimer. Requires [2Fe-2S] cluster as cofactor. The cofactor is Mg(2+).

The enzyme catalyses (2R)-2,3-dihydroxy-3-methylbutanoate = 3-methyl-2-oxobutanoate + H2O. It carries out the reaction (2R,3R)-2,3-dihydroxy-3-methylpentanoate = (S)-3-methyl-2-oxopentanoate + H2O. Its pathway is amino-acid biosynthesis; L-isoleucine biosynthesis; L-isoleucine from 2-oxobutanoate: step 3/4. It participates in amino-acid biosynthesis; L-valine biosynthesis; L-valine from pyruvate: step 3/4. Functionally, functions in the biosynthesis of branched-chain amino acids. Catalyzes the dehydration of (2R,3R)-2,3-dihydroxy-3-methylpentanoate (2,3-dihydroxy-3-methylvalerate) into 2-oxo-3-methylpentanoate (2-oxo-3-methylvalerate) and of (2R)-2,3-dihydroxy-3-methylbutanoate (2,3-dihydroxyisovalerate) into 2-oxo-3-methylbutanoate (2-oxoisovalerate), the penultimate precursor to L-isoleucine and L-valine, respectively. This chain is Dihydroxy-acid dehydratase, found in Buchnera aphidicola subsp. Schizaphis graminum (strain Sg).